The primary structure comprises 134 residues: MNTEMYQTPMEVAVYQLHNFSISFFSSLLGGDVVSVKLDNSASGASVVAIDNKIEQAMDLVKNHLMYAVREEVEILKEQIRELVEKNSQLERENTLLKTLASPEQLEKFQSCLSPEEPAPESPQVPEAPGGSAV.

N-acetylmethionine is present on Met-1. The AP1-binding stretch occupies residues 1-60; that stretch reads MNTEMYQTPMEVAVYQLHNFSISFFSSLLGGDVVSVKLDNSASGASVVAIDNKIEQAMDL. Ala-42 and Val-73 each carry phosphoserine. The leucine-zipper stretch occupies residues 76–97; it reads LKEQIRELVEKNSQLERENTLL. A Phosphoserine modification is found at Ser-102. The interval 108–134 is disordered; that stretch reads KFQSCLSPEEPAPESPQVPEAPGGSAV.

Belongs to the TSC-22/Dip/Bun family. Can form homodimers, however it is likely to function as a monomer. Interacts with NFKB1. Interacts (via N-terminus) with JUN and FOS; these interactions inhibit the binding of active AP1 to its target DNA. In terms of assembly, interacts with MYOD1. Interacts with HDAC1; this interaction affects HDAC1 activity on MYOG promoter and thus inhibits MYOD1 transcriptional activity. Ubiquitously expressed, including in the fetal brain and liver. Expressed in brain, lung, spleen and skeletal muscle. Lower levels detected in heart and kidney. Not detected in the pancreas. In non-lymphoid tissues, in the absence of inflammation, the major source of constitutive expression is the macrophage lineage. Also expressed in cells from different hemopoietic cell lineages, including bone marrow cells, CD34+ stem cells, mature B- and T-cells, monocytes and granulocytes. Down-regulated in activated macrophages from inflammatory lesions of delayed-type hypersensitivity (DTH) reactions, such as in tuberculosis and in Crohn disease, whereas in Burkitt lymphoma, persists in macrophages involved in the phagocytosis of apoptotic malignant cells.

It is found in the cytoplasm. It localises to the nucleus. Protects T-cells from IL2 deprivation-induced apoptosis through the inhibition of FOXO3A transcriptional activity that leads to the down-regulation of the pro-apoptotic factor BCL2L11. In macrophages, plays a role in the anti-inflammatory and immunosuppressive effects of glucocorticoids and IL10. In T-cells, inhibits anti-CD3-induced NFKB1 nuclear translocation and thereby NFKB1 DNA-binding activities. In vitro, suppresses AP-1 transcription factor complex DNA-binding activities. Functionally, inhibits myogenic differentiation and mediates anti-myogenic effects of glucocorticoids by binding and regulating MYOD1 and HDAC1 transcriptional activity resulting in reduced expression of MYOG. The sequence is that of TSC22 domain family protein 3 from Homo sapiens (Human).